The sequence spans 337 residues: Mannan polymerase complex subunit mnn9 (337 aa).

Over 1-8 (MRVYNKSR) the chain is Cytoplasmic. The chain crosses the membrane as a helical; Signal-anchor for type II membrane protein span at residues 9-29 (IVGQLLFVALGITFIYYLFTP). Over 30–337 (SVNSNAKVQI…PYYLVFHHNE (308 aa)) the chain is Lumenal.

It belongs to the ANP1/MMN9/VAN1 family.

It is found in the endoplasmic reticulum membrane. The protein resides in the golgi apparatus membrane. It functions in the pathway protein modification; protein glycosylation. Functionally, required for the addition of the long alpha 1,6-mannose backbone of N-linked glycans on cell wall and periplasmic proteins. This is Mannan polymerase complex subunit mnn9 from Schizosaccharomyces pombe (strain 972 / ATCC 24843) (Fission yeast).